We begin with the raw amino-acid sequence, 270 residues long: Expansin-B10 (270 aa).

The N-terminal stretch at Met-1 to Cys-31 is a signal peptide. Asn-41 carries an N-linked (GlcNAc...) asparagine glycan. The Expansin-like EG45 domain maps to Gly-70–Lys-176. Disulfide bonds link Cys-73/Cys-101, Cys-104/Cys-171, and Cys-109/Cys-115. Residues Asn-188–Ala-269 form the Expansin-like CBD domain.

The protein belongs to the expansin family. Expansin B subfamily. In terms of tissue distribution, expressed in pollen.

It localises to the secreted. The protein localises to the cell wall. It is found in the membrane. Its function is as follows. May aid fertilization by loosening the cell wall of the stigma and style, thereby facilitating penetration of the pollen tube. Acts selectively on grass cell walls, which are relatively poor in pectins and xyloglucans and rich in glucuronoarabinoxylans and (1-3),(1-4)-beta-D-glucans, when compared with cell walls of other angiosperms, including other monocots. The polypeptide is Expansin-B10 (EXPB10) (Zea mays (Maize)).